We begin with the raw amino-acid sequence, 180 residues long: Bifunctional protein PyrR 1 (180 aa).

Substrate-binding positions include 39–40, 103–111, Arg-136, and Val-160; these read TR and DDVLFTGRT. The PRPP-binding motif lies at 99-111; that stretch reads VILVDDVLFTGRT.

Belongs to the purine/pyrimidine phosphoribosyltransferase family. PyrR subfamily. As to quaternary structure, homodimer and homohexamer; in equilibrium.

The catalysed reaction is UMP + diphosphate = 5-phospho-alpha-D-ribose 1-diphosphate + uracil. In terms of biological role, regulates transcriptional attenuation of the pyrimidine nucleotide (pyr) operon by binding in a uridine-dependent manner to specific sites on pyr mRNA. This disrupts an antiterminator hairpin in the RNA and favors formation of a downstream transcription terminator, leading to a reduced expression of downstream genes. Its function is as follows. Also displays a weak uracil phosphoribosyltransferase activity which is not physiologically significant. This chain is Bifunctional protein PyrR 1 (pyrR1), found in Lactiplantibacillus plantarum (strain ATCC BAA-793 / NCIMB 8826 / WCFS1) (Lactobacillus plantarum).